We begin with the raw amino-acid sequence, 333 residues long: Testin-2 (333 aa).

The first 17 residues, methionine 1 to threonine 17, serve as a signal peptide directing secretion. Disulfide bonds link cysteine 135-cysteine 178, cysteine 169-cysteine 211, and cysteine 269-cysteine 322. N-linked (GlcNAc...) asparagine glycosylation occurs at asparagine 173. Active-site residues include histidine 276 and asparagine 300.

It belongs to the peptidase C1 family. Expressed in testis and ovary. Low level in spleen, epididymis, kidney, and uterus. Expressed in primary cultures of Sertoli cells.

The protein localises to the secreted. The polypeptide is Testin-2 (Mus musculus (Mouse)).